The chain runs to 485 residues: NADH-quinone oxidoreductase subunit N (485 aa).

Helical transmembrane passes span Leu8–Ile28, Phe35–Val55, Gly71–Ala91, Phe105–Leu125, Ala127–Phe147, Tyr159–Ala179, Leu203–Phe223, Pro235–Met255, Val271–Gln291, Leu297–Gln317, Val326–Leu346, Ala373–Ile393, Trp408–Val430, and Ile455–Ile475.

Belongs to the complex I subunit 2 family. As to quaternary structure, NDH-1 is composed of 13 different subunits. Subunits NuoA, H, J, K, L, M, N constitute the membrane sector of the complex.

The protein localises to the cell inner membrane. It carries out the reaction a quinone + NADH + 5 H(+)(in) = a quinol + NAD(+) + 4 H(+)(out). Its function is as follows. NDH-1 shuttles electrons from NADH, via FMN and iron-sulfur (Fe-S) centers, to quinones in the respiratory chain. The immediate electron acceptor for the enzyme in this species is believed to be ubiquinone. Couples the redox reaction to proton translocation (for every two electrons transferred, four hydrogen ions are translocated across the cytoplasmic membrane), and thus conserves the redox energy in a proton gradient. The sequence is that of NADH-quinone oxidoreductase subunit N from Salmonella choleraesuis (strain SC-B67).